The primary structure comprises 239 residues: Probable transcriptional regulatory protein LMOf2365_0385 (239 aa).

Belongs to the TACO1 family. YeeN subfamily.

The protein resides in the cytoplasm. The chain is Probable transcriptional regulatory protein LMOf2365_0385 from Listeria monocytogenes serotype 4b (strain F2365).